The sequence spans 227 residues: Cytochrome c oxidase subunit 2 (227 aa).

Over 1 to 14 (MAYPFQLGLQDATS) the chain is Mitochondrial intermembrane. Residues 15–45 (PIMEELLHFHDHTLMIVFLISSLVLYIISLM) form a helical membrane-spanning segment. Over 46 to 59 (LTTKLTHTSTMDAQ) the chain is Mitochondrial matrix. Residues 60 to 87 (EVETVWTILPAIILILIALPSLRILYMM) form a helical membrane-spanning segment. Over 88 to 227 (DEINNPSLTV…YFETWSAVMV (140 aa)) the chain is Mitochondrial intermembrane. Residues histidine 161, cysteine 196, glutamate 198, cysteine 200, histidine 204, and methionine 207 each contribute to the Cu cation site. Glutamate 198 provides a ligand contact to Mg(2+). Phosphotyrosine is present on tyrosine 218.

This sequence belongs to the cytochrome c oxidase subunit 2 family. As to quaternary structure, component of the cytochrome c oxidase (complex IV, CIV), a multisubunit enzyme composed of 14 subunits. The complex is composed of a catalytic core of 3 subunits MT-CO1, MT-CO2 and MT-CO3, encoded in the mitochondrial DNA, and 11 supernumerary subunits COX4I, COX5A, COX5B, COX6A, COX6B, COX6C, COX7A, COX7B, COX7C, COX8 and NDUFA4, which are encoded in the nuclear genome. The complex exists as a monomer or a dimer and forms supercomplexes (SCs) in the inner mitochondrial membrane with NADH-ubiquinone oxidoreductase (complex I, CI) and ubiquinol-cytochrome c oxidoreductase (cytochrome b-c1 complex, complex III, CIII), resulting in different assemblies (supercomplex SCI(1)III(2)IV(1) and megacomplex MCI(2)III(2)IV(2)). Found in a complex with TMEM177, COA6, COX18, COX20, SCO1 and SCO2. Interacts with TMEM177 in a COX20-dependent manner. Interacts with COX20. Interacts with COX16. The cofactor is Cu cation.

The protein localises to the mitochondrion inner membrane. The enzyme catalyses 4 Fe(II)-[cytochrome c] + O2 + 8 H(+)(in) = 4 Fe(III)-[cytochrome c] + 2 H2O + 4 H(+)(out). Functionally, component of the cytochrome c oxidase, the last enzyme in the mitochondrial electron transport chain which drives oxidative phosphorylation. The respiratory chain contains 3 multisubunit complexes succinate dehydrogenase (complex II, CII), ubiquinol-cytochrome c oxidoreductase (cytochrome b-c1 complex, complex III, CIII) and cytochrome c oxidase (complex IV, CIV), that cooperate to transfer electrons derived from NADH and succinate to molecular oxygen, creating an electrochemical gradient over the inner membrane that drives transmembrane transport and the ATP synthase. Cytochrome c oxidase is the component of the respiratory chain that catalyzes the reduction of oxygen to water. Electrons originating from reduced cytochrome c in the intermembrane space (IMS) are transferred via the dinuclear copper A center (CU(A)) of subunit 2 and heme A of subunit 1 to the active site in subunit 1, a binuclear center (BNC) formed by heme A3 and copper B (CU(B)). The BNC reduces molecular oxygen to 2 water molecules using 4 electrons from cytochrome c in the IMS and 4 protons from the mitochondrial matrix. This Lycalopex sechurae (Sechuran desert fox) protein is Cytochrome c oxidase subunit 2 (MT-CO2).